Here is a 402-residue protein sequence, read N- to C-terminus: Propionate kinase (402 aa).

Asn-11 and Lys-18 together coordinate ATP. Asn-11 lines the Mg(2+) pocket. Arg-86 contributes to the substrate binding site. The active-site Proton donor/acceptor is the Asp-143. ATP is bound by residues His-175, 203–207 (HLGNG), 278–280 (DLR), and 326–330 (GIGEN).

It belongs to the acetokinase family. TdcD subfamily. Homodimer. Mg(2+) serves as cofactor.

It catalyses the reaction propanoate + ATP = propanoyl phosphate + ADP. It functions in the pathway amino-acid degradation; L-threonine degradation via propanoate pathway; propanoate from L-threonine: step 4/4. Its function is as follows. Catalyzes the conversion of propionyl phosphate and ADP to propionate and ATP. The sequence is that of Propionate kinase from Enterobacter sp. (strain 638).